We begin with the raw amino-acid sequence, 294 residues long: Probable endonuclease 4 (294 aa).

9 residues coordinate Zn(2+): H71, H111, E148, D182, H185, H217, D230, H232, and E262.

It belongs to the AP endonuclease 2 family. Requires Zn(2+) as cofactor.

It carries out the reaction Endonucleolytic cleavage to 5'-phosphooligonucleotide end-products.. In terms of biological role, endonuclease IV plays a role in DNA repair. It cleaves phosphodiester bonds at apurinic or apyrimidinic (AP) sites, generating a 3'-hydroxyl group and a 5'-terminal sugar phosphate. This chain is Probable endonuclease 4, found in Acholeplasma laidlawii (strain PG-8A).